Here is a 312-residue protein sequence, read N- to C-terminus: Olfactory receptor 6C1 (312 aa).

The Extracellular segment spans residues 1–23; that stretch reads MRNHTEITEFILLGLTDDPNFQV. Asn-3 carries an N-linked (GlcNAc...) asparagine glycan. The chain crosses the membrane as a helical span at residues 24–44; sequence VIFVFLLITYMLSITGNLTLI. The Cytoplasmic segment spans residues 45 to 52; that stretch reads TITLLDSH. A helical transmembrane segment spans residues 53 to 73; the sequence is LQTPMYFFLRNFSILEISFTT. Over 74–97 the chain is Extracellular; sequence VSIPKFLGNIISGDKTISFNNCIV. Cys-95 and Cys-187 are joined by a disulfide. Residues 98–118 traverse the membrane as a helical segment; sequence QLFFFILLGVTEFYLLAAMSY. Topologically, residues 119–137 are cytoplasmic; that stretch reads DRYVAICKPLHCLSIMNRR. A helical transmembrane segment spans residues 138 to 158; the sequence is VCTLLVFTSWLVSFLIIFPAL. Topologically, residues 159–195 are extracellular; it reads MLLLKLHYCRSNIIDHFTCDYFPLLQLACSDTKFLEV. The chain crosses the membrane as a helical span at residues 196–215; that stretch reads MGFSCAAFTLMFTLALIFLS. Residues 216 to 235 are Cytoplasmic-facing; the sequence is YIYIIRTILRIPSTSQRTKA. Residues 236–256 form a helical membrane-spanning segment; the sequence is FSTCSSHMVVVSISYGSCIFM. The Extracellular portion of the chain corresponds to 257–269; that stretch reads YIKPSAKDRVSLS. A helical transmembrane segment spans residues 270-290; sequence KGVAILNTSVAPMMNPFIYSL. Topologically, residues 291–312 are cytoplasmic; it reads RNQQVKQAFINMARKTVFFTST.

Belongs to the G-protein coupled receptor 1 family.

It localises to the cell membrane. Functionally, odorant receptor. The chain is Olfactory receptor 6C1 (OR6C1) from Homo sapiens (Human).